The sequence spans 100 residues: Large ribosomal subunit protein uL23 (100 aa).

It belongs to the universal ribosomal protein uL23 family. Part of the 50S ribosomal subunit. Contacts protein L29, and trigger factor when it is bound to the ribosome.

One of the early assembly proteins it binds 23S rRNA. One of the proteins that surrounds the polypeptide exit tunnel on the outside of the ribosome. Forms the main docking site for trigger factor binding to the ribosome. The sequence is that of Large ribosomal subunit protein uL23 from Aggregatibacter actinomycetemcomitans (Actinobacillus actinomycetemcomitans).